Reading from the N-terminus, the 926-residue chain is Tyrosine-protein phosphatase non-receptor type 4 (926 aa).

In terms of domain architecture, FERM spans 29-312 (VVCNILLLDN…EHHTFFRLDR (284 aa)). Disordered regions lie at residues 379–412 (SDDR…TRVR), 429–474 (SEDF…KKNS), and 492–511 (NESF…GGIP). Composition is skewed to polar residues over residues 398-408 (NHRNSSFTQEA) and 432-455 (FVSQ…PSQE). Serine 474 bears the Phosphoserine mark. The PDZ domain maps to 517–589 (LIKMKPDENG…DQVVLFIKAS (73 aa)). The Tyrosine-protein phosphatase domain occupies 655 to 911 (VLAQFDQLYR…RFVCEAILKV (257 aa)). Residues aspartate 820, 852 to 858 (CSAGIGR), and glutamine 896 contribute to the substrate site. The Phosphocysteine intermediate role is filled by cysteine 852.

This sequence belongs to the protein-tyrosine phosphatase family. Non-receptor class subfamily. In terms of tissue distribution, highly expressed in testis. Specifically expressed in spermatocytes and spermatids within seminiferous tubules (at protein level).

It is found in the cell membrane. Its subcellular location is the cytoplasm. It localises to the cytoskeleton. The enzyme catalyses O-phospho-L-tyrosyl-[protein] + H2O = L-tyrosyl-[protein] + phosphate. Functionally, phosphatase that plays a role in immunity, learning, synaptic plasticity or cell homeostasis. Regulates neuronal cell homeostasis by protecting neurons against apoptosis. Negatively regulates TLR4-induced interferon beta production by dephosphorylating adapter TICAM2 and inhibiting subsequent TRAM-TRIF interaction. Dephosphorylates also the immunoreceptor tyrosine-based activation motifs/ITAMs of the TCR zeta subunit and thereby negatively regulates TCR-mediated signaling pathway. May act at junctions between the membrane and the cytoskeleton. The sequence is that of Tyrosine-protein phosphatase non-receptor type 4 (Ptpn4) from Mus musculus (Mouse).